We begin with the raw amino-acid sequence, 307 residues long: MKSLKQQKIAVLLGGTASEREVSLNSGAAVLDALRSQGYDAHPVDPKDMPVADLKQQGFERVFNILHGRGGEDGVIQGVLEQIGLPYTGCGVMTSALTMDKMRTKMLWKGFGLPIADMEIVTKNTALSLEPQAIVARLGLPLMVKPSREGSSVGLTKVDSADKLKSAVDLALKFDDIVLIEEWLSGDELTVPVLGDEVLPAVQIVPEGEFYDYNAKYISDNTRYICPMPMSDERWDELKNLVKRAYEAVGCRGWSRIDVMTDSEGNFRLIEVNTTPGMTSHSLFPKSAATVGYSFEKLVEKILELSV.

The ATP-grasp domain occupies 105 to 304; that stretch reads KMLWKGFGLP…FEKLVEKILE (200 aa). 135–190 lines the ATP pocket; it reads VARLGLPLMVKPSREGSSVGLTKVDSADKLKSAVDLALKFDDIVLIEEWLSGDELT. D258, E271, and N273 together coordinate Mg(2+).

This sequence belongs to the D-alanine--D-alanine ligase family. The cofactor is Mg(2+). Mn(2+) serves as cofactor.

It is found in the cytoplasm. The catalysed reaction is 2 D-alanine + ATP = D-alanyl-D-alanine + ADP + phosphate + H(+). Its pathway is cell wall biogenesis; peptidoglycan biosynthesis. Cell wall formation. This Actinobacillus succinogenes (strain ATCC 55618 / DSM 22257 / CCUG 43843 / 130Z) protein is D-alanine--D-alanine ligase.